The following is a 945-amino-acid chain: Bifunctional glutamine synthetase adenylyltransferase/adenylyl-removing enzyme (945 aa).

An adenylyl removase region spans residues 1-440 (MMPLSPQLQQ…VFNELIGDDE (440 aa)). The tract at residues 449–945 (AEYWRELWQD…SASWQKWLMA (497 aa)) is adenylyl transferase.

The protein belongs to the GlnE family. The cofactor is Mg(2+).

It carries out the reaction [glutamine synthetase]-O(4)-(5'-adenylyl)-L-tyrosine + phosphate = [glutamine synthetase]-L-tyrosine + ADP. It catalyses the reaction [glutamine synthetase]-L-tyrosine + ATP = [glutamine synthetase]-O(4)-(5'-adenylyl)-L-tyrosine + diphosphate. In terms of biological role, involved in the regulation of glutamine synthetase GlnA, a key enzyme in the process to assimilate ammonia. When cellular nitrogen levels are high, the C-terminal adenylyl transferase (AT) inactivates GlnA by covalent transfer of an adenylyl group from ATP to specific tyrosine residue of GlnA, thus reducing its activity. Conversely, when nitrogen levels are low, the N-terminal adenylyl removase (AR) activates GlnA by removing the adenylyl group by phosphorolysis, increasing its activity. The regulatory region of GlnE binds the signal transduction protein PII (GlnB) which indicates the nitrogen status of the cell. The chain is Bifunctional glutamine synthetase adenylyltransferase/adenylyl-removing enzyme from Klebsiella pneumoniae subsp. pneumoniae (strain ATCC 700721 / MGH 78578).